Here is a 589-residue protein sequence, read N- to C-terminus: Vesicular glutamate transporter 3 (589 aa).

The Cytoplasmic segment spans residues 1–76; that stretch reads MPFKAFDTFK…CHCCGLPKRY (76 aa). The segment covering 40-49 has biased composition (acidic residues); it reads TEEEDNIELN. Residues 40–61 form a disordered region; it reads TEEEDNIELNEEGRPVQTSRPS. A helical membrane pass occupies residues 77–97; that stretch reads IIAIMSGLGFCISFGIRCNLG. Over 98–130 the chain is Vesicular; it reads VAIVEMVNNSTVYVDGKPEIQTAQFNWDPETVG. Asn-106 carries N-linked (GlcNAc...) asparagine glycosylation. A helical transmembrane segment spans residues 131 to 151; it reads LIHGSFFWGYIMTQIPGGFIS. The Cytoplasmic portion of the chain corresponds to 152–153; the sequence is NK. Residues 154 to 174 traverse the membrane as a helical segment; sequence FAANRVFGAAIFLTSTLNMFI. Topologically, residues 175-182 are vesicular; sequence PSAARVHY. The helical transmembrane segment at 183 to 203 threads the bilayer; the sequence is GCVMCVRILQGLVEGVTYPAC. The Cytoplasmic portion of the chain corresponds to 204–221; sequence HGMWSKWAPPLERSRLAT. Residues 222–242 traverse the membrane as a helical segment; the sequence is TSFCGSYAGAVVAMPLAGVLV. Topologically, residues 243-249 are vesicular; sequence QYIGWSS. Residues 250–270 form a helical membrane-spanning segment; that stretch reads VFYIYGMFGIIWYMFWLLQAY. Residues 271 to 314 lie on the Cytoplasmic side of the membrane; that stretch reads ECPAAHPTISNEEKTYIETSIGEGANVVSLSKFSTPWKRFFTSL. The helical transmembrane segment at 315–335 threads the bilayer; sequence PVYAIIVANFCRSWTFYLLLI. The Vesicular segment spans residues 336 to 353; the sequence is SQPAYFEEVFGFAISKVG. The helical transmembrane segment at 354–374 threads the bilayer; that stretch reads LLSAVPHMVMTIVVPIGGQLA. Over 375-390 the chain is Cytoplasmic; sequence DYLRSRQILTTTAVRK. A helical transmembrane segment spans residues 391–411; the sequence is IMNCGGFGMEATLLLVVGFSH. The Vesicular portion of the chain corresponds to 412-413; that stretch reads TK. A helical membrane pass occupies residues 414 to 434; sequence GVAISFLVLAVGFSGFAISGF. The Cytoplasmic portion of the chain corresponds to 435-447; the sequence is NVNHLDIAPRYAS. The helical transmembrane segment at 448 to 468 threads the bilayer; it reads ILMGISNGVGTLSGMVCPLIV. Residues 469-481 lie on the Vesicular side of the membrane; that stretch reads GAMTRHKTREEWQ. Residues 482 to 502 traverse the membrane as a helical segment; the sequence is NVFLIAALVHYSGVIFYGVFA. Topologically, residues 503 to 586 are cytoplasmic; sequence SGEKQEWADP…SYQNEERNFS (84 aa). Positions 559-589 are disordered; sequence KKEWKGQRGATLDEEELTSYQNEERNFSTIS. Residues 580–589 show a composition bias toward basic and acidic residues; the sequence is NEERNFSTIS.

The protein belongs to the major facilitator superfamily. Sodium/anion cotransporter family. VGLUT subfamily. In terms of tissue distribution, expressed in amygdala, cerebellum, hippocampus, medulla, spinal cord and thalamus.

Its subcellular location is the cytoplasmic vesicle. It is found in the secretory vesicle. The protein resides in the synaptic vesicle membrane. It localises to the cell membrane. The protein localises to the synapse. Its subcellular location is the synaptosome. It carries out the reaction L-glutamate(out) = L-glutamate(in). It catalyses the reaction 3 Na(+)(out) + phosphate(out) = 3 Na(+)(in) + phosphate(in). The enzyme catalyses chloride(in) = chloride(out). The L-glutamate uniporter activity exhibits a biphasic dependence on chloride concentration. Chloride channel activity is allosterically activated by lumenal H(+) and Cl(-) leading to synaptic vesicles acidification. The glutamate transport activity is allosterically activated by lumenal H(+) and Cl(-), preventing non-vesicular L-glutamate release. In terms of biological role, multifunctional transporter that transports L-glutamate as well as multiple ions such as chloride, sodium and phosphate. At the synaptic vesicle membrane, mainly functions as an uniporter that mediates the uptake of L-glutamate into synaptic vesicles at presynaptic nerve terminals of excitatory neural cells. The L-glutamate uniporter activity is electrogenic and is driven by the proton electrochemical gradient, mainly by the electrical gradient established by the vacuolar H(+)-ATPase across the synaptic vesicle membrane. In addition, functions as a chloride channel that allows a chloride permeation through the synaptic vesicle membrane that affects the proton electrochemical gradient and promotes synaptic vesicles acidification. At the plasma membrane, following exocytosis, functions as a symporter of Na(+) and phosphate from the extracellular space to the cytoplasm allowing synaptic phosphate homeostasis regulation. The symporter activity is electrogenic. Moreover, operates synergistically with SLC18A3/VACHT under a constant H(+) gradient, thereby allowing striatal vesicular acetylcholine uptake. The sequence is that of Vesicular glutamate transporter 3 from Homo sapiens (Human).